Consider the following 278-residue polypeptide: TATA box-binding protein-associated factor RNA polymerase I subunit D (278 aa).

Disordered stretches follow at residues 20–71 (ANRS…SSFE) and 88–116 (KKRY…RNPI). Residues 22-33 (RSDNSSDSSLFK) show a composition bias toward polar residues. Ser-23 carries the phosphoserine modification. Basic residues predominate over residues 88–99 (KKRYKKKKKRRY). Phosphoserine is present on residues Ser-138 and Ser-234.

As to quaternary structure, component of the transcription factor SL1/TIF-IB complex, composed of TBP and at least TAF1A, TAF1B, TAF1C and TAF1D. Interacts with UBTF.

It localises to the nucleus. Its function is as follows. Component of the transcription factor SL1/TIF-IB complex, which is involved in the assembly of the PIC (preinitiation complex) during RNA polymerase I-dependent transcription. The rate of PIC formation probably is primarily dependent on the rate of association of SL1/TIF-IB with the rDNA promoter. SL1/TIF-IB is involved in stabilization of nucleolar transcription factor 1/UBTF on rDNA. Formation of SL1/TIF-IB excludes the association of TBP with TFIID subunits. In Homo sapiens (Human), this protein is TATA box-binding protein-associated factor RNA polymerase I subunit D (TAF1D).